We begin with the raw amino-acid sequence, 811 residues long: DNA mismatch repair protein MutS (811 aa).

ATP is bound at residue 583–590; it reads GPNMAGKS.

This sequence belongs to the DNA mismatch repair MutS family.

Functionally, this protein is involved in the repair of mismatches in DNA. It is possible that it carries out the mismatch recognition step. This protein has a weak ATPase activity. The chain is DNA mismatch repair protein MutS from Thermus thermophilus (strain ATCC BAA-163 / DSM 7039 / HB27).